The chain runs to 362 residues: Biotin synthase (362 aa).

The interval 14-39 (AQRTPEPLPPTSQGLARPSHDVVRGP) is disordered. One can recognise a Radical SAM core domain in the interval 87 to 316 (HKGGPAALCG…ARDILVCGGR (230 aa)). Residues C105, C109, and C112 each coordinate [4Fe-4S] cluster. Positions 181 and 241 each coordinate [2Fe-2S] cluster.

The protein belongs to the radical SAM superfamily. Biotin synthase family. In terms of assembly, homodimer. [4Fe-4S] cluster serves as cofactor. [2Fe-2S] cluster is required as a cofactor.

It carries out the reaction (4R,5S)-dethiobiotin + (sulfur carrier)-SH + 2 reduced [2Fe-2S]-[ferredoxin] + 2 S-adenosyl-L-methionine = (sulfur carrier)-H + biotin + 2 5'-deoxyadenosine + 2 L-methionine + 2 oxidized [2Fe-2S]-[ferredoxin]. The protein operates within cofactor biosynthesis; biotin biosynthesis; biotin from 7,8-diaminononanoate: step 2/2. Catalyzes the conversion of dethiobiotin (DTB) to biotin by the insertion of a sulfur atom into dethiobiotin via a radical-based mechanism. This chain is Biotin synthase, found in Nitratidesulfovibrio vulgaris (strain ATCC 29579 / DSM 644 / CCUG 34227 / NCIMB 8303 / VKM B-1760 / Hildenborough) (Desulfovibrio vulgaris).